Consider the following 127-residue polypeptide: Fluoride-specific ion channel FluC (127 aa).

4 helical membrane-spanning segments follow: residues 3 to 23, 36 to 56, 72 to 92, and 101 to 121; these read ALLL…LLGV, GTFA…GGLA, VGAL…ALMI, and FAYS…GLLL. The Na(+) site is built by G76 and T79.

This sequence belongs to the fluoride channel Fluc/FEX (TC 1.A.43) family.

The protein localises to the cell inner membrane. It carries out the reaction fluoride(in) = fluoride(out). Na(+) is not transported, but it plays an essential structural role and its presence is essential for fluoride channel function. Its function is as follows. Fluoride-specific ion channel. Important for reducing fluoride concentration in the cell, thus reducing its toxicity. This is Fluoride-specific ion channel FluC from Phenylobacterium zucineum (strain HLK1).